A 454-amino-acid polypeptide reads, in one-letter code: Tryptophanase (454 aa).

N6-(pyridoxal phosphate)lysine is present on K256.

Belongs to the beta-eliminating lyase family. Homotetramer. It depends on pyridoxal 5'-phosphate as a cofactor.

It catalyses the reaction L-tryptophan + H2O = indole + pyruvate + NH4(+). It participates in amino-acid degradation; L-tryptophan degradation via pyruvate pathway; indole and pyruvate from L-tryptophan: step 1/1. The sequence is that of Tryptophanase (tnaA) from Rhodobacter capsulatus (Rhodopseudomonas capsulata).